A 316-amino-acid polypeptide reads, in one-letter code: Oligopeptide transport system permease protein AppB (316 aa).

Transmembrane regions (helical) follow at residues 10-30, 100-120, 138-158, 177-197, 240-260, and 290-310; these read LMSI…MKAA, LLLM…FGVL, FIGL…VLSV, IFDR…ADMA, LPVI…SVVV, and VISA…YAIV. The 208-residue stretch at 96 to 303 folds into the ABC transmembrane type-1 domain; that stretch reads LPNTLLLMLV…VLVVVGNLIA (208 aa).

This sequence belongs to the binding-protein-dependent transport system permease family. OppBC subfamily.

Its subcellular location is the cell membrane. Functionally, this protein is a component of an oligopeptide permease, a binding protein-dependent transport system. This APP system can completely substitute for the OPP system in both sporulation and genetic competence, though, unlike OPP, is incapable of transporting tripeptides. Probably responsible for the translocation of the substrate across the membrane. The chain is Oligopeptide transport system permease protein AppB (appB) from Bacillus subtilis (strain 168).